The chain runs to 921 residues: Protein translocase subunit SecA (921 aa).

Residues Gln87, 105–109 (GEGKT), and Asp516 contribute to the ATP site. Zn(2+)-binding residues include Cys905, Cys907, Cys916, and His917.

Belongs to the SecA family. Monomer and homodimer. Part of the essential Sec protein translocation apparatus which comprises SecA, SecYEG and auxiliary proteins SecDF-YajC and YidC. The cofactor is Zn(2+).

Its subcellular location is the cell inner membrane. The protein localises to the cytoplasm. It carries out the reaction ATP + H2O + cellular proteinSide 1 = ADP + phosphate + cellular proteinSide 2.. In terms of biological role, part of the Sec protein translocase complex. Interacts with the SecYEG preprotein conducting channel. Has a central role in coupling the hydrolysis of ATP to the transfer of proteins into and across the cell membrane, serving both as a receptor for the preprotein-SecB complex and as an ATP-driven molecular motor driving the stepwise translocation of polypeptide chains across the membrane. The polypeptide is Protein translocase subunit SecA (Albidiferax ferrireducens (strain ATCC BAA-621 / DSM 15236 / T118) (Rhodoferax ferrireducens)).